A 250-amino-acid chain; its full sequence is 23S rRNA (guanosine-2'-O-)-methyltransferase RlmB (250 aa).

Residues G198, L218, and L227 each contribute to the S-adenosyl-L-methionine site.

This sequence belongs to the class IV-like SAM-binding methyltransferase superfamily. RNA methyltransferase TrmH family. RlmB subfamily.

It is found in the cytoplasm. It catalyses the reaction guanosine(2251) in 23S rRNA + S-adenosyl-L-methionine = 2'-O-methylguanosine(2251) in 23S rRNA + S-adenosyl-L-homocysteine + H(+). Functionally, specifically methylates the ribose of guanosine 2251 in 23S rRNA. The sequence is that of 23S rRNA (guanosine-2'-O-)-methyltransferase RlmB from Pseudomonas syringae pv. tomato (strain ATCC BAA-871 / DC3000).